Reading from the N-terminus, the 39-residue chain is Contryphan-Cal2 (39 aa).

The signal sequence occupies residues 1 to 20 (MTRTAVLLLTLLFLVAMAAS). Residues cysteine 29 and cysteine 35 are joined by a disulfide bond.

In terms of tissue distribution, expressed by the venom duct.

Its subcellular location is the secreted. Functionally, probable neurotoxin. The polypeptide is Contryphan-Cal2 (Californiconus californicus (California cone)).